The chain runs to 461 residues: Probable outer membrane lipoprotein SilC (461 aa).

The N-terminal stretch at 1–17 (MFKLKLLSISTIFILAG) is a signal peptide. The N-palmitoyl cysteine moiety is linked to residue cysteine 18. Cysteine 18 is lipidated: S-diacylglycerol cysteine.

It belongs to the outer membrane factor (OMF) (TC 1.B.17) family.

The protein localises to the cell outer membrane. In terms of biological role, component of the sil cation-efflux system that confers resistance to silver. May be part of a three-component cation/proton antiporter. The protein is Probable outer membrane lipoprotein SilC (silC) of Salmonella typhimurium.